Consider the following 80-residue polypeptide: MKRILIAPVRFYQRFISPVFPPSCRFELTCSNYMIQAIEKHGFKGVLMGLARILRCHPWSKTGKDPVPDHFSLKRNQEGE.

The disordered stretch occupies residues 61–80 (KTGKDPVPDHFSLKRNQEGE). The segment covering 62–80 (TGKDPVPDHFSLKRNQEGE) has biased composition (basic and acidic residues).

Belongs to the UPF0161 family.

It localises to the cell membrane. In terms of biological role, could be involved in insertion of integral membrane proteins into the membrane. The sequence is that of Putative membrane protein insertion efficiency factor from Streptococcus pneumoniae serotype 19F (strain G54).